A 174-amino-acid polypeptide reads, in one-letter code: Gamma-crystallin D (174 aa).

Beta/gamma crystallin 'Greek key' domains follow at residues 2 to 40 (GKIT…RVDS) and 41 to 83 (GCWM…RLIP). Residues 84 to 87 (HAGS) are connecting peptide. Beta/gamma crystallin 'Greek key' domains are found at residues 88-128 (HRLR…NVLE) and 129-171 (GSWV…RRVI).

It belongs to the beta/gamma-crystallin family.

Functionally, crystallins are the dominant structural components of the vertebrate eye lens. This is Gamma-crystallin D (CRYGD) from Bos taurus (Bovine).